The chain runs to 138 residues: Invertebrate-type lysozyme 6 (138 aa).

The signal sequence occupies residues 1-18; it reads MFVKLCGILAFAVTYASS. The I-type lysozyme domain maps to 19–138; sequence DCLQCICKKE…WNGIKGLGCS (120 aa). Cystine bridges form between Cys-20–Cys-106, Cys-25–Cys-31, Cys-36–Cys-45, Cys-58–Cys-86, Cys-76–Cys-82, and Cys-98–Cys-120. Glu-28 functions as the Proton donor in the catalytic mechanism. Asp-39 acts as the Nucleophile in catalysis. 51–57 is a substrate binding site; sequence KLSYYKD. Substrate-binding positions include Tyr-90 and 113-115; that span reads HNG.

This sequence belongs to the glycosyl hydrolase 22 family. Type-I lysozyme subfamily. Expressed in pharyngeal gland cells and duct projections, coelomocytes and intestine.

It carries out the reaction Hydrolysis of (1-&gt;4)-beta-linkages between N-acetylmuramic acid and N-acetyl-D-glucosamine residues in a peptidoglycan and between N-acetyl-D-glucosamine residues in chitodextrins.. Its function is as follows. Has bacteriolytic activity against Gram-positive bacteria. This is Invertebrate-type lysozyme 6 from Caenorhabditis elegans.